The primary structure comprises 189 residues: HTH-type transcriptional regulator Hpr (189 aa).

An HTH marR-type domain is found at 12 to 156; the sequence is ALLYSHKIVQ…ISAIVRRLYG (145 aa). Residues 62 to 85 constitute a DNA-binding region (H-T-H motif); the sequence is ISEIAKYGVMHVSTAFNFSKKLED.

In terms of assembly, homodimer.

Negative regulator of protease production and sporulation. This Exiguobacterium sibiricum (strain DSM 17290 / CCUG 55495 / CIP 109462 / JCM 13490 / 255-15) protein is HTH-type transcriptional regulator Hpr.